The sequence spans 115 residues: Double-headed protease inhibitor, submandibular gland (115 aa).

Kazal-like domains are found at residues 6–66 and 67–115; these read IGRE…ACDI and ECTE…HGEC. Intrachain disulfides connect Cys-12–Cys-46, Cys-24–Cys-43, Cys-32–Cys-64, Cys-68–Cys-97, Cys-75–Cys-94, and Cys-83–Cys-115.

The protein resides in the secreted. Its function is as follows. This inhibitor is composed of two homologous actively inhibiting halves: one which inhibits trypsin, the other which inhibits elastase. This is Double-headed protease inhibitor, submandibular gland from Canis lupus familiaris (Dog).